Consider the following 409-residue polypeptide: TAR DNA-binding protein 43 (409 aa).

RRM domains follow at residues 105–200 (SDLI…RCTE) and 191–262 (RKVF…TAEP). Disordered stretches follow at residues 260–302 (AEPK…NQGG) and 341–409 (SQQN…GWGM). Basic and acidic residues predominate over residues 261 to 274 (EPKHNNNRQLERGG). Residues 281 to 292 (FGNQGYPNSRPS) are compositionally biased toward polar residues. 2 stretches are compositionally biased toward low complexity: residues 341 to 387 (SQQN…PNAG) and 395 to 409 (GFSS…GWGM).

In terms of assembly, homodimer.

It is found in the nucleus. Its subcellular location is the cytoplasm. The protein resides in the stress granule. The protein localises to the mitochondrion. Functionally, probably involved in transcriptional repression. May play a role in the maintenance of the circadian clock periodicity. This is TAR DNA-binding protein 43 (tardbp) from Xenopus tropicalis (Western clawed frog).